A 428-amino-acid polypeptide reads, in one-letter code: CRS2-associated factor 1, mitochondrial (428 aa).

The transit peptide at 1-21 (MLLLAGLLRRARPPRRPSVRR) directs the protein to the mitochondrion. Disordered regions lie at residues 33 to 100 (PPAS…REPK) and 129 to 152 (HADD…RERV). 2 CRM domains span residues 155–253 (EPLT…KRPV) and 275–371 (EGLT…IQDN). The disordered stretch occupies residues 378 to 428 (SVLEEESAGAESENGDQEQASSDWASDECSQLSSSDEMPDDKSAISEADSD). Residues 380–393 (LEEESAGAESENGD) are compositionally biased toward acidic residues. The span at 394-413 (QEQASSDWASDECSQLSSSD) shows a compositional bias: polar residues.

Part of large ribonucleo-protein complexes that include group IIB introns.

The protein resides in the mitochondrion. Functionally, may be involved in the splicing of group IIB introns in mitochondria. This chain is CRS2-associated factor 1, mitochondrial, found in Oryza sativa subsp. japonica (Rice).